The chain runs to 586 residues: Paxillin (586 aa).

Met-1 is modified (N-acetylmethionine). The LD motif 1 signature appears at 3 to 15 (DLDALLADLESTT). Residues 13–138 (STTSHISKRP…PSPTVMSSSL (126 aa)) are disordered. Tyr-31 is subject to Phosphotyrosine; by PTK6. Pro residues predominate over residues 45-54 (VPPPVPPPPS). Ser-83 and Ser-85 each carry phosphoserine. Residues 86–98 (PIYSSSTKNSSAS) are compositionally biased toward low complexity. Tyr-88 is modified (phosphotyrosine). At Ser-106 the chain carries Phosphoserine. Position 118 is a phosphotyrosine; by PTK6 (Tyr-118). A phosphoserine mark is found at Ser-119, Ser-126, and Ser-130. The segment covering 121–137 (PNKQKSAEPSPTVMSSS) has biased composition (polar residues). Thr-132 is modified (phosphothreonine). Phosphoserine is present on residues Ser-137, Ser-140, and Ser-143. An LD motif 2 motif is present at residues 144–156 (ELDRLLLELNAVQ). Position 210 is a phosphotyrosine (Tyr-210). The disordered stretch occupies residues 220–241 (GGKAGPLMKEKPKRNGGRGLED). Residues 245–257 (SVESLLDELENSV) carry the LD motif 3 motif. The residue at position 259 (Ser-259) is a Phosphoserine. Residues 266–290 (VNQGEMSSPQRVTSSQQQTRISASS) are disordered. At Ser-273 the chain carries Phosphoserine; by CDK5. Residues Ser-279, Ser-287, Ser-290, Ser-301, Ser-317, Ser-327, and Ser-335 each carry the phosphoserine modification. The interval 291–310 (ATRELDELMASLSDFKFMAQ) is required for binding to PARVA and ILK. Residues 294-305 (ELDELMASLSDF) carry the LD motif 4 motif. Positions 309-329 (AQGKTGSSSPPGGLSKPGSQL) are disordered. A compositionally biased stretch (low complexity) spans 310 to 329 (QGKTGSSSPPGGLSKPGSQL). The short motif at 328-340 (QLDSMLGSLQSDL) is the LD motif 5 element. 3 consecutive LIM zinc-binding domains span residues 353-403 (CGAC…CEKD), 412-462 (CYYC…CRKD), and 471-521 (CGGC…CEVH). Ser-528 bears the Phosphoserine mark. The region spanning 530-580 (CSGCQKPITGRCITAMAKKFHPEHFVCAFCLKQLNKGTFKEQNDKPYCQSC) is the LIM zinc-binding 4 domain.

Belongs to the paxillin family. As to quaternary structure, interacts in vitro with VCL/vinculin as well as to the SH3 domain of SRC and, when tyrosine phosphorylated, to the SH2 domain of CRK. Interacts with GIT1. Interacts with NUDT16L1/SDOS. Interacts with PTK2/FAK1. Interacts with PTK2B/PYK2. Interacts with ASAP2. Interacts with unphosphorylated ITGA4. Interacts with RNF5. Interacts with PDCD10. Interacts with NEK3, the interaction is prolactin-dependent. Interacts with PTK6. Interacts with TGFB1I1. Interacts with SORBS1. Interacts with PARVB. Interacts (via LD motif 4) with PARVA/PARVIN. Interacts (via LD motif 4) with ILK. Interacts (via cytoplasmic domain) with CEACAM1; the interaction is phosphotyrosyl-dependent. Interacts with LIMA1; this complex stabilizes actin dynamics. Interacts with CD36 (via C-terminus). Interacts with TRIM15. Interacts with PAK4; PAK4 acts as a scaffold to suppport PAXI phosphorylation at Ser-301. Post-translationally, phosphorylated by MAPK1/ERK2. Phosphorylated on tyrosine residues during integrin-mediated cell adhesion, embryonic development, fibroblast transformation and following stimulation of cells by mitogens. Phosphorylation at Ser-273 by CDK5 reduces its interaction with PTK2/FAK1 in matrix-cell focal adhesions (MCFA) during oligodendrocytes (OLs) differentiation. Phosphorylation at Tyr-31 and Tyr-118 by PTK6 promote the activation of RAC1 via CRK/CrKII, thereby promoting migration and invasion. Phosphorylation at Ser-279 by SLK is required for PXN redistribution and cell motility. Phosphorylation at Ser-301 promotes focal adhesion disassembly during cell migration.

The protein localises to the cytoplasm. The protein resides in the cytoskeleton. It localises to the cell junction. It is found in the focal adhesion. Its subcellular location is the cell cortex. Functionally, cytoskeletal protein involved in actin-membrane attachment at sites of cell adhesion to the extracellular matrix (focal adhesion). Recruits other proteins such as TRIM15 to focal adhesion. In Rattus norvegicus (Rat), this protein is Paxillin.